Here is a 569-residue protein sequence, read N- to C-terminus: Acyl-CoA-binding domain-containing protein 5 (569 aa).

An N-terminal signal peptide occupies residues 1-31 (MELFYELLLTAAASLLVAFLLARLLASAATA). The 92-residue stretch at 415–506 (IEKRFGVAAA…LSEAIPGWMG (92 aa)) folds into the ACB domain. Positions 474 and 493 each coordinate an acyl-CoA. A glycan (N-linked (GlcNAc...) asparagine) is linked at N508. Composition is skewed to polar residues over residues 533–544 (INQHDSQGNEDN) and 552–569 (LTSSPNPEKGQSSDIPAE). A disordered region spans residues 533–569 (INQHDSQGNEDNTGMYEGHLTSSPNPEKGQSSDIPAE).

Belongs to the ACBP family. In terms of tissue distribution, highly expressed in seeds and leaves. Expressed at low levels in roots.

It is found in the endoplasmic reticulum. In terms of biological role, binds medium- and long-chain acyl-CoA esters with high affinity. Can interact in vitro with palmitoyl-CoA and linolenoyl-CoA. Binds phosphatidic acid (PA) and phosphatidylcholine (PC) in vitro. May play a role in the biosynthesis of phospholipids. This Oryza sativa subsp. japonica (Rice) protein is Acyl-CoA-binding domain-containing protein 5.